Here is a 350-residue protein sequence, read N- to C-terminus: Flap endonuclease 1 (350 aa).

The N-domain stretch occupies residues Met1–Arg102. 7 residues coordinate Mg(2+): Asp31, Asp84, Glu156, Glu158, Asp177, Asp179, and Asp240. The interval Ala120–Lys262 is I-domain. Residues Lys341 to Phe349 are interaction with PCNA.

The protein belongs to the XPG/RAD2 endonuclease family. FEN1 subfamily. As to quaternary structure, interacts with PCNA. PCNA stimulates the nuclease activity without altering cleavage specificity. It depends on Mg(2+) as a cofactor.

Functionally, structure-specific nuclease with 5'-flap endonuclease and 5'-3' exonuclease activities involved in DNA replication and repair. During DNA replication, cleaves the 5'-overhanging flap structure that is generated by displacement synthesis when DNA polymerase encounters the 5'-end of a downstream Okazaki fragment. Binds the unpaired 3'-DNA end and kinks the DNA to facilitate 5' cleavage specificity. Cleaves one nucleotide into the double-stranded DNA from the junction in flap DNA, leaving a nick for ligation. Also involved in the base excision repair (BER) pathway. Acts as a genome stabilization factor that prevents flaps from equilibrating into structures that lead to duplications and deletions. Also possesses 5'-3' exonuclease activity on nicked or gapped double-stranded DNA. This chain is Flap endonuclease 1, found in Staphylothermus marinus (strain ATCC 43588 / DSM 3639 / JCM 9404 / F1).